The following is a 130-amino-acid chain: Small ribosomal subunit protein bS6 (130 aa).

Residues 99 to 130 are disordered; it reads ASPMVKAKDERRERHDFASEANDDSEAGDSEE. The segment covering 104-116 has biased composition (basic and acidic residues); the sequence is KAKDERRERHDFA. Acidic residues predominate over residues 119–130; that stretch reads ANDDSEAGDSEE.

The protein belongs to the bacterial ribosomal protein bS6 family.

Functionally, binds together with bS18 to 16S ribosomal RNA. The chain is Small ribosomal subunit protein bS6 from Yersinia enterocolitica serotype O:8 / biotype 1B (strain NCTC 13174 / 8081).